Reading from the N-terminus, the 367-residue chain is Cobalt-precorrin-5B C(1)-methyltransferase (367 aa).

It belongs to the CbiD family.

It carries out the reaction Co-precorrin-5B + S-adenosyl-L-methionine = Co-precorrin-6A + S-adenosyl-L-homocysteine. The protein operates within cofactor biosynthesis; adenosylcobalamin biosynthesis; cob(II)yrinate a,c-diamide from sirohydrochlorin (anaerobic route): step 6/10. Its function is as follows. Catalyzes the methylation of C-1 in cobalt-precorrin-5B to form cobalt-precorrin-6A. The protein is Cobalt-precorrin-5B C(1)-methyltransferase of Leptospira interrogans serogroup Icterohaemorrhagiae serovar copenhageni (strain Fiocruz L1-130).